The sequence spans 133 residues: Small ribosomal subunit protein eS8 (133 aa).

The interval 1 to 22 (MGFYQGPDNRKITGGLKGKHRD) is disordered.

Belongs to the eukaryotic ribosomal protein eS8 family. Part of the 30S ribosomal subunit.

In Saccharolobus islandicus (strain Y.N.15.51 / Yellowstone #2) (Sulfolobus islandicus), this protein is Small ribosomal subunit protein eS8.